Here is a 318-residue protein sequence, read N- to C-terminus: Taste receptor type 2 member 7 (318 aa).

The Extracellular segment spans residues 1–9 (MTDKVQTTL). A helical membrane pass occupies residues 10-30 (LFLAVGEFSVGILGNAFIGLV). At 31–55 (NCMDWIKKRKIASIDLILTSLAISR) the chain is on the cytoplasmic side. Residues 56–76 (ICLLCVILLDCFILVLYPDVY) form a helical membrane-spanning segment. Residues 77-94 (ATGKEMRIIDFFWILTNH) are Extracellular-facing. Residues 95-115 (LSIWFATCLSIYYFFKIANFF) form a helical membrane-spanning segment. The Cytoplasmic portion of the chain corresponds to 116 to 128 (HPLFLWMKWRIDR). A helical transmembrane segment spans residues 129–149 (VISWILLGCMVLSVFISLPAT). Over 150–187 (ENLNADFRFCVKAKRKTNLTWSCRVNKTQHASIKLLLN) the chain is Extracellular. N167 and N175 each carry an N-linked (GlcNAc...) asparagine glycan. Residues 188–208 (LATLLPFCVCLMSFFLLILSL) form a helical membrane-spanning segment. Topologically, residues 209-235 (RRHIRRMQLSATGCRDPSTEAHVRALK) are cytoplasmic. Residues 236–256 (AVISFLLLFIAYYLSFLIATS) traverse the membrane as a helical segment. Over 257–266 (SYFMPETELA) the chain is Extracellular. The chain crosses the membrane as a helical span at residues 267 to 287 (VIFGESIALIYPSSHSFILIL). Over 288–318 (GNNKLRHASLKVIWKVMSILKGRKFQQHKQI) the chain is Cytoplasmic.

Belongs to the G-protein coupled receptor T2R family.

It localises to the membrane. Gustducin-coupled receptor implicated in the perception of bitter compounds in the oral cavity and the gastrointestinal tract. Signals through PLCB2 and the calcium-regulated cation channel TRPM5. The protein is Taste receptor type 2 member 7 (TAS2R7) of Pongo pygmaeus (Bornean orangutan).